The primary structure comprises 95 residues: Small ribosomal subunit protein bS18 (95 aa).

This sequence belongs to the bacterial ribosomal protein bS18 family. Part of the 30S ribosomal subunit. Forms a tight heterodimer with protein bS6.

In terms of biological role, binds as a heterodimer with protein bS6 to the central domain of the 16S rRNA, where it helps stabilize the platform of the 30S subunit. The protein is Small ribosomal subunit protein bS18 of Ehrlichia canis (strain Jake).